A 91-amino-acid polypeptide reads, in one-letter code: Acylphosphatase (91 aa).

The region spanning 5–91 (CSKFIVSGHV…EHDYQGFEIL (87 aa)) is the Acylphosphatase-like domain. Asn-38 is an active-site residue.

This sequence belongs to the acylphosphatase family.

The catalysed reaction is an acyl phosphate + H2O = a carboxylate + phosphate + H(+). This chain is Acylphosphatase (acyP), found in Vibrio cholerae serotype O1 (strain ATCC 39541 / Classical Ogawa 395 / O395).